The primary structure comprises 266 residues: Small ribosomal subunit protein eS1 (266 aa).

A disordered region spans residues 233 to 266 (GEGGGSSAAKPSGDDTGAKVDRADGYEPPIQETV). Residues 244-257 (SGDDTGAKVDRADG) show a composition bias toward basic and acidic residues.

This sequence belongs to the eukaryotic ribosomal protein eS1 family. As to quaternary structure, component of the small ribosomal subunit. Mature ribosomes consist of a small (40S) and a large (60S) subunit. The 40S subunit contains about 33 different proteins and 1 molecule of RNA (18S). The 60S subunit contains about 49 different proteins and 3 molecules of RNA (28S, 5.8S and 5S). Part of the small subunit (SSU) processome, composed of more than 70 proteins and the RNA chaperone small nucleolar RNA (snoRNA) U3.

Its subcellular location is the cytoplasm. It localises to the nucleus. The protein localises to the nucleolus. Component of the small ribosomal subunit. The ribosome is a large ribonucleoprotein complex responsible for the synthesis of proteins in the cell. Part of the small subunit (SSU) processome, first precursor of the small eukaryotic ribosomal subunit. During the assembly of the SSU processome in the nucleolus, many ribosome biogenesis factors, an RNA chaperone and ribosomal proteins associate with the nascent pre-rRNA and work in concert to generate RNA folding, modifications, rearrangements and cleavage as well as targeted degradation of pre-ribosomal RNA by the RNA exosome. May play a role during erythropoiesis. The chain is Small ribosomal subunit protein eS1 (rps3a) from Salmo salar (Atlantic salmon).